A 189-amino-acid polypeptide reads, in one-letter code: Cancer/testis antigen family 45 member A10 (189 aa).

This sequence belongs to the CT45 family.

The protein resides in the nucleus. In Homo sapiens (Human), this protein is Cancer/testis antigen family 45 member A10.